Consider the following 439-residue polypeptide: MKFYWSQIYSWLLRTPYRSLERAYRASKKIQHIKKNYIFYNKNIISSSRRSWQAIMLYINTNLNNCVFIIYWSLLEYRISLFFFDFIKTFVLIISNFFNSFFSNLISNNVIKQDLKEIKQMNKKLAWIEASLNDLDMWKYYYSFSFFSKEKQKTVETSLTFVDLKKNNVTTAAYESIGLVPRSITRTLSGFKTELTGQSTSLVLQDFQIARYQALASLQYMLFLLFIPWGFSSLLKIWFLEPWLKNWWNTYQYQIFLNSFQEELALKRLQQIEELVWLDKIMVNSLKEPQSQDLNIEIHQKTIQLVKIYNENSLNTLLHLLTDIVYVITLSAVFILGKQRLAILNSWIQELFYSLSDTMKAFSILLLTDLCIGFHSPHGWEIVIGSFLEHLGFAHNKHIISCFVSTFPVILDTVFKYWIFRHLNRISPSIVATYHTMNE.

A run of 6 helical transmembrane segments spans residues 55–75 (IMLYINTNLNNCVFIIYWSLL), 79–99 (ISLFFFDFIKTFVLIISNFFN), 220–240 (YMLFLLFIPWGFSSLLKIWFL), 317–337 (LLHLLTDIVYVITLSAVFILG), 364–384 (ILLLTDLCIGFHSPHGWEIVI), and 399–419 (IISCFVSTFPVILDTVFKYWI).

It belongs to the CemA family.

The protein resides in the plastid. Its subcellular location is the chloroplast inner membrane. It catalyses the reaction K(+)(in) + H(+)(out) = K(+)(out) + H(+)(in). Functionally, contributes to K(+)/H(+) antiport activity by supporting proton efflux to control proton extrusion and homeostasis in chloroplasts in a light-dependent manner to modulate photosynthesis. Prevents excessive induction of non-photochemical quenching (NPQ) under continuous-light conditions. Indirectly promotes efficient inorganic carbon uptake into chloroplasts. In Physcomitrium patens (Spreading-leaved earth moss), this protein is Potassium/proton antiporter CemA.